The following is a 183-amino-acid chain: Somatotropin (183 aa).

H19 contributes to the Zn(2+) binding site. Residues 38–67 (EEQRHSHKSSPSAFCQSETIPAPTGKEDAQ) form a disordered region. Over residues 46–56 (SSPSAFCQSET) the composition is skewed to polar residues. An intrachain disulfide couples C52 to C156. E165 lines the Zn(2+) pocket. The cysteines at positions 173 and 181 are disulfide-linked.

Belongs to the somatotropin/prolactin family.

It localises to the secreted. Growth hormone plays an important role in growth control and is involved in the regulation of several anabolic processes. Implicated as an osmoregulatory substance important for seawater adaptation. This Prionace glauca (Blue shark) protein is Somatotropin (gh).